Here is a 363-residue protein sequence, read N- to C-terminus: S-adenosylmethionine:tRNA ribosyltransferase-isomerase (363 aa).

It belongs to the QueA family. In terms of assembly, monomer.

The protein localises to the cytoplasm. The enzyme catalyses 7-aminomethyl-7-carbaguanosine(34) in tRNA + S-adenosyl-L-methionine = epoxyqueuosine(34) in tRNA + adenine + L-methionine + 2 H(+). Its pathway is tRNA modification; tRNA-queuosine biosynthesis. Functionally, transfers and isomerizes the ribose moiety from AdoMet to the 7-aminomethyl group of 7-deazaguanine (preQ1-tRNA) to give epoxyqueuosine (oQ-tRNA). This is S-adenosylmethionine:tRNA ribosyltransferase-isomerase from Mannheimia succiniciproducens (strain KCTC 0769BP / MBEL55E).